The primary structure comprises 256 residues: UPF0280 protein MTH_727 (256 aa).

The protein belongs to the UPF0280 family.

The sequence is that of UPF0280 protein MTH_727 from Methanothermobacter thermautotrophicus (strain ATCC 29096 / DSM 1053 / JCM 10044 / NBRC 100330 / Delta H) (Methanobacterium thermoautotrophicum).